A 247-amino-acid chain; its full sequence is ATP synthase subunit a, chloroplastic (247 aa).

Helical transmembrane passes span 38–58, 95–115, 134–154, 199–219, and 220–240; these read QVLI…TLAV, VPFI…GALL, INTT…AGIS, LVVV…VMFL, and GLFT…AYIG.

The protein belongs to the ATPase A chain family. As to quaternary structure, F-type ATPases have 2 components, CF(1) - the catalytic core - and CF(0) - the membrane proton channel. CF(1) has five subunits: alpha(3), beta(3), gamma(1), delta(1), epsilon(1). CF(0) has four main subunits: a, b, b' and c.

The protein resides in the plastid. The protein localises to the chloroplast thylakoid membrane. Its function is as follows. Key component of the proton channel; it plays a direct role in the translocation of protons across the membrane. This Daucus carota (Wild carrot) protein is ATP synthase subunit a, chloroplastic.